A 373-amino-acid polypeptide reads, in one-letter code: Queuine tRNA-ribosyltransferase (373 aa).

Catalysis depends on Asp89, which acts as the Proton acceptor. Substrate contacts are provided by residues 89–93 (DSGGF), Asp143, Gln192, and Gly220. The segment at 251 to 257 (GVGTPED) is RNA binding. The Nucleophile role is filled by Asp270. The segment at 275–279 (TRNAR) is RNA binding; important for wobble base 34 recognition. Positions 308, 310, 313, and 339 each coordinate Zn(2+).

The protein belongs to the queuine tRNA-ribosyltransferase family. Homodimer. Within each dimer, one monomer is responsible for RNA recognition and catalysis, while the other monomer binds to the replacement base PreQ1. Requires Zn(2+) as cofactor.

It catalyses the reaction 7-aminomethyl-7-carbaguanine + guanosine(34) in tRNA = 7-aminomethyl-7-carbaguanosine(34) in tRNA + guanine. It participates in tRNA modification; tRNA-queuosine biosynthesis. Functionally, catalyzes the base-exchange of a guanine (G) residue with the queuine precursor 7-aminomethyl-7-deazaguanine (PreQ1) at position 34 (anticodon wobble position) in tRNAs with GU(N) anticodons (tRNA-Asp, -Asn, -His and -Tyr). Catalysis occurs through a double-displacement mechanism. The nucleophile active site attacks the C1' of nucleotide 34 to detach the guanine base from the RNA, forming a covalent enzyme-RNA intermediate. The proton acceptor active site deprotonates the incoming PreQ1, allowing a nucleophilic attack on the C1' of the ribose to form the product. After dissociation, two additional enzymatic reactions on the tRNA convert PreQ1 to queuine (Q), resulting in the hypermodified nucleoside queuosine (7-(((4,5-cis-dihydroxy-2-cyclopenten-1-yl)amino)methyl)-7-deazaguanosine). This Aliarcobacter butzleri (strain RM4018) (Arcobacter butzleri) protein is Queuine tRNA-ribosyltransferase.